The primary structure comprises 294 residues: Ribosomal protein L11 methyltransferase (294 aa).

Positions 146, 167, 189, and 231 each coordinate S-adenosyl-L-methionine.

It belongs to the methyltransferase superfamily. PrmA family.

It localises to the cytoplasm. It carries out the reaction L-lysyl-[protein] + 3 S-adenosyl-L-methionine = N(6),N(6),N(6)-trimethyl-L-lysyl-[protein] + 3 S-adenosyl-L-homocysteine + 3 H(+). Its function is as follows. Methylates ribosomal protein L11. The chain is Ribosomal protein L11 methyltransferase from Aliivibrio salmonicida (strain LFI1238) (Vibrio salmonicida (strain LFI1238)).